Here is a 118-residue protein sequence, read N- to C-terminus: Large ribosomal subunit protein uL18 (118 aa).

Belongs to the universal ribosomal protein uL18 family. As to quaternary structure, part of the 50S ribosomal subunit; part of the 5S rRNA/L5/L18/L25 subcomplex. Contacts the 5S and 23S rRNAs.

In terms of biological role, this is one of the proteins that bind and probably mediate the attachment of the 5S RNA into the large ribosomal subunit, where it forms part of the central protuberance. This is Large ribosomal subunit protein uL18 from Lactobacillus acidophilus (strain ATCC 700396 / NCK56 / N2 / NCFM).